Here is a 142-residue protein sequence, read N- to C-terminus: Transcriptional regulator MraZ (142 aa).

2 consecutive SpoVT-AbrB domains span residues glutamate 5–glutamate 47 and alanine 76–arginine 119.

The protein belongs to the MraZ family. As to quaternary structure, forms oligomers.

The protein resides in the cytoplasm. The protein localises to the nucleoid. This is Transcriptional regulator MraZ from Limosilactobacillus reuteri (strain DSM 20016) (Lactobacillus reuteri).